Reading from the N-terminus, the 146-residue chain is Hemoglobin subunit beta (146 aa).

V1 carries the N-acetylvaline modification. The Globin domain occupies H2–H146. T12 carries the phosphothreonine modification. Residue S44 is modified to Phosphoserine. K59 is modified (N6-acetyllysine). Residue H63 coordinates heme b. K82 is modified (N6-acetyllysine). H92 is a heme b binding site. At C93 the chain carries S-nitrosocysteine. Position 144 is an N6-acetyllysine (K144).

Belongs to the globin family. In terms of assembly, heterotetramer of two alpha chains and two beta chains. In terms of tissue distribution, red blood cells.

In terms of biological role, involved in oxygen transport from the lung to the various peripheral tissues. This is Hemoglobin subunit beta (HBB) from Odobenus rosmarus divergens (Pacific walrus).